We begin with the raw amino-acid sequence, 95 residues long: MSIDESTAARVAKLARIKVEPAALPALAGEFNTILGFIEQLNEVDIDGVEPMTSVTPQVLKRRADVVADGDQQARVLSNAPDAREGFFAVPKVVE.

This sequence belongs to the GatC family. Heterotrimer of A, B and C subunits.

The enzyme catalyses L-glutamyl-tRNA(Gln) + L-glutamine + ATP + H2O = L-glutaminyl-tRNA(Gln) + L-glutamate + ADP + phosphate + H(+). It carries out the reaction L-aspartyl-tRNA(Asn) + L-glutamine + ATP + H2O = L-asparaginyl-tRNA(Asn) + L-glutamate + ADP + phosphate + 2 H(+). In terms of biological role, allows the formation of correctly charged Asn-tRNA(Asn) or Gln-tRNA(Gln) through the transamidation of misacylated Asp-tRNA(Asn) or Glu-tRNA(Gln) in organisms which lack either or both of asparaginyl-tRNA or glutaminyl-tRNA synthetases. The reaction takes place in the presence of glutamine and ATP through an activated phospho-Asp-tRNA(Asn) or phospho-Glu-tRNA(Gln). The sequence is that of Aspartyl/glutamyl-tRNA(Asn/Gln) amidotransferase subunit C from Roseobacter denitrificans (strain ATCC 33942 / OCh 114) (Erythrobacter sp. (strain OCh 114)).